Reading from the N-terminus, the 416-residue chain is Neurotensin receptor type 2 (416 aa).

Residues 1-32 (METSSLWPPRPSPSAGLSLEARLGVDTRLWAK) lie on the Extracellular side of the membrane. The helical transmembrane segment at 33–55 (VLFTALYSLIFALGTAGNALSVH) threads the bilayer. Residues 56–64 (VVLKARAGR) are Cytoplasmic-facing. A helical transmembrane segment spans residues 65–87 (PGRLRYHVLSLALSALLLLLISV). Residues 88–109 (PMELYNFVWSHYPWVFGDLGCR) are Extracellular-facing. Cys108 and Cys194 form a disulfide bridge. The helical transmembrane segment at 110 to 131 (GYYFVRELCAYATVLSVASLSA) threads the bilayer. Residues 132–154 (ERCLAVCQPLRARRLLTPRRTRR) lie on the Cytoplasmic side of the membrane. The chain crosses the membrane as a helical span at residues 155 to 176 (LLSLVWVASLGLALPMAVIMGQ). Residues 177 to 217 (KHEMERADGEPEPASRVCTVLVSRATLQVFIQVNVLVSFVL) lie on the Extracellular side of the membrane. The helical transmembrane segment at 218-237 (PLALTAFLNGITVNHLVALY) threads the bilayer. Residues 238–297 (SQVPSASAQVNSIPSRLELLSEEGLLGFITWRKTLSLGVQASLVRHKDASQIRSLQHSAQ) are Cytoplasmic-facing. A helical transmembrane segment spans residues 298-318 (VLRAIVAVYVICWLPYHARRL). Residues 319–337 (MYCYIPDDGWTDELYDFYH) are Extracellular-facing. Residues 338-358 (YFYMVTNTLFYVSSAVTPVLY) form a helical membrane-spanning segment. The Cytoplasmic portion of the chain corresponds to 359–416 (NAVSSSFRKLFLESLSSLCGEQRSVVPLPQEAPESTTSTYSFRLWGSPRNPSLGEIQV). Cys377 carries S-palmitoyl cysteine lipidation. Ser410 is subject to Phosphoserine.

This sequence belongs to the G-protein coupled receptor 1 family. Neurotensin receptor subfamily. NTSR2 sub-subfamily. As to expression, expressed maximally in the cerebellum, hippocampus, piriform cortex and neocortex of adult brain.

Its subcellular location is the cell membrane. Its function is as follows. Receptor for the tridecapeptide neurotensin. It is associated with G proteins that activate a phosphatidylinositol-calcium second messenger system. In Mus musculus (Mouse), this protein is Neurotensin receptor type 2 (Ntsr2).